Consider the following 182-residue polypeptide: NADH-quinone oxidoreductase subunit I (182 aa).

4Fe-4S ferredoxin-type domains follow at residues 52-82 (LTRD…LQKA) and 92-121 (DFFR…LTPD). The [4Fe-4S] cluster site is built by cysteine 62, cysteine 65, cysteine 68, cysteine 72, cysteine 101, cysteine 104, cysteine 107, and cysteine 111.

This sequence belongs to the complex I 23 kDa subunit family. As to quaternary structure, NDH-1 is composed of 13 different subunits. Subunits NuoA, H, J, K, L, M, N constitute the membrane sector of the complex. [4Fe-4S] cluster is required as a cofactor.

It is found in the cell inner membrane. The enzyme catalyses a quinone + NADH + 5 H(+)(in) = a quinol + NAD(+) + 4 H(+)(out). NDH-1 shuttles electrons from NADH, via FMN and iron-sulfur (Fe-S) centers, to quinones in the respiratory chain. The immediate electron acceptor for the enzyme in this species is believed to be ubiquinone. Couples the redox reaction to proton translocation (for every two electrons transferred, four hydrogen ions are translocated across the cytoplasmic membrane), and thus conserves the redox energy in a proton gradient. The protein is NADH-quinone oxidoreductase subunit I of Pseudomonas fluorescens (strain ATCC BAA-477 / NRRL B-23932 / Pf-5).